The primary structure comprises 200 residues: Peptidyl-tRNA hydrolase (200 aa).

TRNA is bound at residue Phe-16. The Proton acceptor role is filled by His-21. Phe-67, Asn-69, and Asn-115 together coordinate tRNA.

The protein belongs to the PTH family. Monomer.

The protein localises to the cytoplasm. It carries out the reaction an N-acyl-L-alpha-aminoacyl-tRNA + H2O = an N-acyl-L-amino acid + a tRNA + H(+). In terms of biological role, hydrolyzes ribosome-free peptidyl-tRNAs (with 1 or more amino acids incorporated), which drop off the ribosome during protein synthesis, or as a result of ribosome stalling. Its function is as follows. Catalyzes the release of premature peptidyl moieties from peptidyl-tRNA molecules trapped in stalled 50S ribosomal subunits, and thus maintains levels of free tRNAs and 50S ribosomes. This is Peptidyl-tRNA hydrolase from Prochlorococcus marinus (strain MIT 9215).